The chain runs to 176 residues: Non-specific lipid transfer protein GPI-anchored 12 (176 aa).

The N-terminal stretch at 1-20 is a signal peptide; that stretch reads MLTTNTLAVLLLLFLSLCSG. Intrachain disulfides connect cysteine 40–cysteine 83, cysteine 50–cysteine 67, cysteine 68–cysteine 110, and cysteine 81–cysteine 120. Residue asparagine 46 is glycosylated (N-linked (GlcNAc...) asparagine). Asparagine 149 carries GPI-anchor amidated asparagine lipidation. The propeptide at 150 to 176 is removed in mature form; it reads GAMTTKYCGVALNSLALLLLFTFLSLS.

The protein belongs to the plant LTP family. As to expression, preferentially expressed in the endodermis of hypocotyls and roots of seedlings, and in petals and anthers of inflorescences. May also be expressed in siliques, carpels and pedicels.

The protein localises to the cell membrane. Functionally, probable lipid transfer protein. The polypeptide is Non-specific lipid transfer protein GPI-anchored 12 (Arabidopsis thaliana (Mouse-ear cress)).